The sequence spans 216 residues: Large ribosomal subunit protein uL3 (216 aa).

A disordered region spans residues 137–157; it reads GASHGAHKNHRKPGSIGGAST.

It belongs to the universal ribosomal protein uL3 family. As to quaternary structure, part of the 50S ribosomal subunit. Forms a cluster with proteins L14 and L19.

In terms of biological role, one of the primary rRNA binding proteins, it binds directly near the 3'-end of the 23S rRNA, where it nucleates assembly of the 50S subunit. The chain is Large ribosomal subunit protein uL3 from Paenarthrobacter aurescens (strain TC1).